Consider the following 98-residue polypeptide: DNA-binding protein Fis (98 aa).

Residues 74–93 (QTRAATMLGINRGTLRKKLK) constitute a DNA-binding region (H-T-H motif).

The protein belongs to the transcriptional regulatory Fis family. As to quaternary structure, homodimer.

Activates ribosomal RNA transcription. Plays a direct role in upstream activation of rRNA promoters. In Mannheimia haemolytica (Pasteurella haemolytica), this protein is DNA-binding protein Fis.